We begin with the raw amino-acid sequence, 320 residues long: Olfactory receptor 52N1 (320 aa).

The Extracellular segment spans residues 1 to 27 (MSFLNGTSLTPASFILNGIPGLEDVHL). Asparagine 5 carries an N-linked (GlcNAc...) asparagine glycan. A helical membrane pass occupies residues 28–48 (WISFPLCTMYSIAITGNFGLM). The Cytoplasmic portion of the chain corresponds to 49–56 (YLIYCDEA). The helical transmembrane segment at 57 to 77 (LHRPMYVFLALLSFTDVLMCT) threads the bilayer. At 78 to 101 (STLPNTLFILWFNLKEIDFKACLA) the chain is on the extracellular side. A disulfide bond links cysteine 99 and cysteine 191. The helical transmembrane segment at 102–122 (QMFFVHTFTGMESGVLMLMAL) threads the bilayer. Residues 123–141 (DHCVAICFPLRYATILTNS) lie on the Cytoplasmic side of the membrane. The helical transmembrane segment at 142 to 162 (VIAKAGFLTFLRGVMLVIPST) threads the bilayer. At 163-198 (FLTKRLPYCKGNVIPHTYCDHMSVAKISCGNVRVNA) the chain is on the extracellular side. Residues 199 to 219 (IYGLIVALLIGGFDILCITIS) traverse the membrane as a helical segment. The Cytoplasmic portion of the chain corresponds to 220–239 (YTMILQAVVSLSSADARQKA). The helical transmembrane segment at 240–260 (FSTCTAHFCAIVLTYVPAFFT) threads the bilayer. Over 261–276 (FFTHHFGGHTIPLHIH) the chain is Extracellular. A helical transmembrane segment spans residues 277–297 (IIMANLYLLMPPTMNPIVYGV). Topologically, residues 298–320 (KTRQVRESVIRFFLKGKDNSHNF) are cytoplasmic.

Belongs to the G-protein coupled receptor 1 family.

It is found in the cell membrane. In terms of biological role, odorant receptor. This Homo sapiens (Human) protein is Olfactory receptor 52N1 (OR52N1).